Consider the following 807-residue polypeptide: Glycerol-3-phosphate acyltransferase (807 aa).

Positions 308–313 (CHRSHM) match the HXXXXD motif motif.

The protein belongs to the GPAT/DAPAT family.

It localises to the cell inner membrane. The catalysed reaction is sn-glycerol 3-phosphate + an acyl-CoA = a 1-acyl-sn-glycero-3-phosphate + CoA. It participates in phospholipid metabolism; CDP-diacylglycerol biosynthesis; CDP-diacylglycerol from sn-glycerol 3-phosphate: step 1/3. The protein is Glycerol-3-phosphate acyltransferase of Shewanella frigidimarina (strain NCIMB 400).